The primary structure comprises 169 residues: CKLF-like MARVEL transmembrane domain-containing protein 1 (169 aa).

The 119-residue stretch at 17 to 135 folds into the MARVEL domain; it reads NLKQPETAAA…DAFVVTTKMR (119 aa). Transmembrane regions (helical) follow at residues 22–42, 46–66, 79–99, and 110–130; these read ETAA…ITQA, FITI…IYVL, LLDL…AILA, and YVGG…AFVV.

The protein belongs to the chemokine-like factor family. In terms of tissue distribution, highly expressed in testis.

It is found in the membrane. The protein is CKLF-like MARVEL transmembrane domain-containing protein 1 (CMTM1) of Homo sapiens (Human).